We begin with the raw amino-acid sequence, 247 residues long: 7-carboxy-7-deazaguanine synthase (247 aa).

Substrate-binding positions include 15–17 and Arg-30; that span reads IQG. The region spanning 21–247 is the Radical SAM core domain; sequence LVGRRQIFVR…PQMHRALGLR (227 aa). [4Fe-4S] cluster is bound by residues Cys-34, Cys-38, and Cys-41. Thr-43 is a binding site for Mg(2+). Substrate is bound at residue Thr-78. Gly-80 serves as a coordination point for S-adenosyl-L-methionine.

The protein belongs to the radical SAM superfamily. 7-carboxy-7-deazaguanine synthase family. As to quaternary structure, homodimer. [4Fe-4S] cluster serves as cofactor. Requires S-adenosyl-L-methionine as cofactor. The cofactor is Mg(2+).

The catalysed reaction is 6-carboxy-5,6,7,8-tetrahydropterin + H(+) = 7-carboxy-7-deazaguanine + NH4(+). Its pathway is purine metabolism; 7-cyano-7-deazaguanine biosynthesis. Catalyzes the complex heterocyclic radical-mediated conversion of 6-carboxy-5,6,7,8-tetrahydropterin (CPH4) to 7-carboxy-7-deazaguanine (CDG), a step common to the biosynthetic pathways of all 7-deazapurine-containing compounds. The chain is 7-carboxy-7-deazaguanine synthase from Methanothermobacter thermautotrophicus (strain ATCC 29096 / DSM 1053 / JCM 10044 / NBRC 100330 / Delta H) (Methanobacterium thermoautotrophicum).